The sequence spans 112 residues: MKVLDVLKKNKDYGRVCRRGKSVADRHIVMYFLDNNLGRCRYGFAVSRKIRSAVRRNRARRLLREACRLNKEKFPEGYDFVFMARRDMTDLKCQQVEESILKLLKRAEINRS.

It belongs to the RnpA family. In terms of assembly, consists of a catalytic RNA component (M1 or rnpB) and a protein subunit.

The catalysed reaction is Endonucleolytic cleavage of RNA, removing 5'-extranucleotides from tRNA precursor.. Its function is as follows. RNaseP catalyzes the removal of the 5'-leader sequence from pre-tRNA to produce the mature 5'-terminus. It can also cleave other RNA substrates such as 4.5S RNA. The protein component plays an auxiliary but essential role in vivo by binding to the 5'-leader sequence and broadening the substrate specificity of the ribozyme. This chain is Ribonuclease P protein component, found in Pelotomaculum thermopropionicum (strain DSM 13744 / JCM 10971 / SI).